Consider the following 199-residue polypeptide: CASP-like protein 1D2 (199 aa).

Positions 1–27 are disordered; the sequence is MASTENPDPETGKSEPIPASATPPPSS. The residue at position 2 (Ala2) is an N-acetylalanine. Residues 2–36 lie on the Cytoplasmic side of the membrane; that stretch reads ASTENPDPETGKSEPIPASATPPPSSAASFLDCRK. A helical membrane pass occupies residues 37–57; it reads IDIITRVLLFSATLTALIVMV. Residues 58-85 are Extracellular-facing; the sequence is TSDQTEMTQLPGVSSPAPVSAEFNDSPA. Residues 86 to 106 form a helical membrane-spanning segment; the sequence is FIYFVVALVVASFYALISTLV. The Cytoplasmic portion of the chain corresponds to 107 to 129; sequence SISLLLKPEFTAQFSIYLASLDM. Residues 130–150 form a helical membrane-spanning segment; the sequence is VMLGILASATGTAGGVAYIAL. The Extracellular segment spans residues 151–171; sequence KGNEEVGWNKICNVYDKFCRY. Residues 172-192 traverse the membrane as a helical segment; the sequence is IATSLALSLFASLLLLVLSIW. The Cytoplasmic segment spans residues 193 to 199; the sequence is SALSKRT.

It belongs to the Casparian strip membrane proteins (CASP) family. As to quaternary structure, homodimer and heterodimers. Expressed in the root endodermis and flowers.

It is found in the cell membrane. This chain is CASP-like protein 1D2, found in Arabidopsis thaliana (Mouse-ear cress).